A 119-amino-acid polypeptide reads, in one-letter code: Hemerythrin subunit B (119 aa).

7 residues coordinate Fe cation: H26, H55, E59, H74, H78, H107, and D112.

The protein belongs to the hemerythrin family.

Its function is as follows. Hemerythrin is a respiratory protein in blood cells of certain marine worms. The oxygen-binding site in each chain contains two iron atoms. The polypeptide is Hemerythrin subunit B (Sipunculus nudus (Sipunculan worm)).